Consider the following 102-residue polypeptide: PqqA binding protein (102 aa).

Belongs to the PqqD family. As to quaternary structure, monomer. Interacts with PqqE.

It participates in cofactor biosynthesis; pyrroloquinoline quinone biosynthesis. Its function is as follows. Functions as a PqqA binding protein and presents PqqA to PqqE, in the pyrroloquinoline quinone (PQQ) biosynthetic pathway. The sequence is that of PqqA binding protein from Rhodopseudomonas palustris (strain ATCC BAA-98 / CGA009).